Consider the following 186-residue polypeptide: ATP synthase subunit delta (186 aa).

The protein belongs to the ATPase delta chain family. As to quaternary structure, F-type ATPases have 2 components, F(1) - the catalytic core - and F(0) - the membrane proton channel. F(1) has five subunits: alpha(3), beta(3), gamma(1), delta(1), epsilon(1). F(0) has three main subunits: a(1), b(2) and c(10-14). The alpha and beta chains form an alternating ring which encloses part of the gamma chain. F(1) is attached to F(0) by a central stalk formed by the gamma and epsilon chains, while a peripheral stalk is formed by the delta and b chains.

It is found in the cellular chromatophore membrane. Its function is as follows. F(1)F(0) ATP synthase produces ATP from ADP in the presence of a proton or sodium gradient. F-type ATPases consist of two structural domains, F(1) containing the extramembraneous catalytic core and F(0) containing the membrane proton channel, linked together by a central stalk and a peripheral stalk. During catalysis, ATP synthesis in the catalytic domain of F(1) is coupled via a rotary mechanism of the central stalk subunits to proton translocation. This protein is part of the stalk that links CF(0) to CF(1). It either transmits conformational changes from CF(0) to CF(1) or is implicated in proton conduction. The sequence is that of ATP synthase subunit delta from Rhodobacter capsulatus (Rhodopseudomonas capsulata).